A 321-amino-acid polypeptide reads, in one-letter code: Polygalacturonan/rhamnogalacturonan transport system permease protein YteP (321 aa).

The ABC transmembrane type-1 domain occupies 1–144; sequence MKTAEAQAPA…YIPHFMSWVI (144 aa). The next 3 helical transmembrane spans lie at 21–41, 63–83, and 123–143; these read RKRLLIKLIQQKYLYLMILPG, YQPFLGILGSEWVGLKHFIRL, and IALFKKFVQTLIYIPHFMSWV.

This sequence belongs to the binding-protein-dependent transport system permease family. As to quaternary structure, the complex is probably composed of two ATP-binding proteins (MsmX), two transmembrane proteins (YtcP and YteP) and a solute-binding protein (YtcQ).

It is found in the cell membrane. Its function is as follows. Involved in pectin degradation. Part of the ABC transporter complex YtcQP-YteP involved in the uptake of polygalacturonan and rhamnogalacturonan type I. Responsible for the translocation of the substrate across the membrane. This chain is Polygalacturonan/rhamnogalacturonan transport system permease protein YteP (yteP), found in Bacillus subtilis (strain 168).